The chain runs to 264 residues: Agamous-like MADS-box protein AGL15 (264 aa).

Residues 3-57 (RGKIEIKRIENANSRQVTFSKRRAGLLKKAHELSVLCDAEVAVIVFSKSGKLFEF) enclose the MADS-box domain. In terms of domain architecture, K-box spans 87–177 (NQEECTEVDL…RRQVQELRSF (91 aa)). The tract at residues 223–264 (LQLGLPGEAHDTRKNEGDRESPSSDSVTTSTTRATAQRISLV) is disordered. A compositionally biased stretch (basic and acidic residues) spans 230-244 (EAHDTRKNEGDRESP). The segment covering 245–257 (SSDSVTTSTTRAT) has biased composition (low complexity).

Its subcellular location is the nucleus. Functionally, probable transcription factor. The protein is Agamous-like MADS-box protein AGL15 (AGL15) of Brassica napus (Rape).